The primary structure comprises 549 residues: Lipase 3 (549 aa).

The first 15 residues, 1–15 (MKLALALSLIASVAA), serve as a signal peptide directing secretion. C75 and C112 are joined by a disulfide. S224 serves as the catalytic Acyl-ester intermediate. An intrachain disulfide couples C283 to C292. An N-linked (GlcNAc...) asparagine glycan is attached at N329. Residue E356 is the Charge relay system of the active site. A glycan (N-linked (GlcNAc...) asparagine) is linked at N366. Residue H464 is the Charge relay system of the active site.

It belongs to the type-B carboxylesterase/lipase family. Monomer and homodimer.

The enzyme catalyses a triacylglycerol + H2O = a diacylglycerol + a fatty acid + H(+). The polypeptide is Lipase 3 (LIP3) (Diutina rugosa (Yeast)).